The sequence spans 72 residues: Translation initiation factor IF-1 (72 aa).

Residues 1 to 72 (MARDDVIEVD…DKGRITFRYK (72 aa)) form the S1-like domain.

This sequence belongs to the IF-1 family. As to quaternary structure, component of the 30S ribosomal translation pre-initiation complex which assembles on the 30S ribosome in the order IF-2 and IF-3, IF-1 and N-formylmethionyl-tRNA(fMet); mRNA recruitment can occur at any time during PIC assembly.

The protein resides in the cytoplasm. In terms of biological role, one of the essential components for the initiation of protein synthesis. Stabilizes the binding of IF-2 and IF-3 on the 30S subunit to which N-formylmethionyl-tRNA(fMet) subsequently binds. Helps modulate mRNA selection, yielding the 30S pre-initiation complex (PIC). Upon addition of the 50S ribosomal subunit IF-1, IF-2 and IF-3 are released leaving the mature 70S translation initiation complex. In Helicobacter pylori (strain HPAG1), this protein is Translation initiation factor IF-1.